The following is a 221-amino-acid chain: Glutathione S-transferase (221 aa).

The residue at position 1 (Met-1) is an N-acetylmethionine. Ala-2 is subject to N-acetylalanine; in Glutathione S-transferase, N-terminally processed. A GST N-terminal domain is found at Gly-3–Gly-82. Glutathione-binding positions include Tyr-9, Lys-45, Gln-53 to Val-54, and Gln-66 to Thr-67. The GST C-terminal domain occupies Asp-84–Asp-208.

The protein belongs to the GST superfamily. Alpha family. In terms of assembly, homodimer or heterodimer of GSTA1 and GSTA2.

The protein resides in the cytoplasm. The catalysed reaction is RX + glutathione = an S-substituted glutathione + a halide anion + H(+). The enzyme catalyses prostaglandin A2 + glutathione = prostaglandin A2-S-(R)-glutathione. It carries out the reaction prostaglandin J2 + glutathione = prostaglandin J2-S-(R)-glutathione. It catalyses the reaction (13S)-hydroperoxy-(9Z,11E)-octadecadienoate + 2 glutathione = (13S)-hydroxy-(9Z,11E)-octadecadienoate + glutathione disulfide + H2O. The catalysed reaction is androst-5-ene-3,17-dione = androst-4-ene-3,17-dione. Functionally, glutathione S-transferase that catalyzes the nucleophilic attack of the sulfur atom of glutathione on the electrophilic groups of a wide range of exogenous and endogenous compounds. Involved in the formation of glutathione conjugates of both prostaglandin A2 (PGA2) and prostaglandin J2 (PGJ2). It also catalyzes the isomerization of D5-androstene-3,17-dione (AD) into D4-androstene-3,17-dione and may therefore play an important role in hormone biosynthesis. Through its glutathione-dependent peroxidase activity toward the fatty acid hydroperoxide (13S)-hydroperoxy-(9Z,11E)-octadecadienoate/13-HPODE it is also involved in the metabolism of oxidized linoleic acid. The protein is Glutathione S-transferase of Antechinus stuartii (Brown marsupial mouse).